We begin with the raw amino-acid sequence, 278 residues long: Putative phosphoenolpyruvate synthase regulatory protein (278 aa).

158–165 (GVSRSGKT) is a binding site for ADP.

The protein belongs to the pyruvate, phosphate/water dikinase regulatory protein family. PSRP subfamily.

It catalyses the reaction [pyruvate, water dikinase] + ADP = [pyruvate, water dikinase]-phosphate + AMP + H(+). The catalysed reaction is [pyruvate, water dikinase]-phosphate + phosphate + H(+) = [pyruvate, water dikinase] + diphosphate. Functionally, bifunctional serine/threonine kinase and phosphorylase involved in the regulation of the phosphoenolpyruvate synthase (PEPS) by catalyzing its phosphorylation/dephosphorylation. In Acinetobacter baumannii (strain AYE), this protein is Putative phosphoenolpyruvate synthase regulatory protein.